We begin with the raw amino-acid sequence, 84 residues long: MSEPIENLTVDAELDAVGLFCPEPVMMLHQKVRDLPAGGLLKVIATDPSTRRDIPKFCVFLGHELVAEQAEEGTFLYWIRKKSD.

Catalysis depends on cysteine 21, which acts as the Cysteine persulfide intermediate.

This sequence belongs to the sulfur carrier protein TusA family.

It localises to the cytoplasm. In terms of biological role, sulfur carrier protein which probably makes part of a sulfur-relay system. In Pseudomonas syringae pv. syringae (strain B728a), this protein is Sulfur carrier protein TusA.